The chain runs to 345 residues: Phosphate import ATP-binding protein PstB 2 (345 aa).

Residues methionine 1 to glutamate 57 form a disordered region. Positions glutamate 8–alanine 18 are enriched in basic and acidic residues. Residues aspartate 19–alanine 35 show a composition bias toward low complexity. Over residues glycine 42–glutamate 52 the composition is skewed to gly residues. The ABC transporter domain maps to valine 86–valine 340. Residue glycine 118–serine 125 participates in ATP binding.

Belongs to the ABC transporter superfamily. Phosphate importer (TC 3.A.1.7) family. As to quaternary structure, the complex is composed of two ATP-binding proteins (PstB), two transmembrane proteins (PstC and PstA) and a solute-binding protein (PstS).

It is found in the cell membrane. The enzyme catalyses phosphate(out) + ATP + H2O = ADP + 2 phosphate(in) + H(+). Functionally, part of the ABC transporter complex PstSACB involved in phosphate import. Responsible for energy coupling to the transport system. This is Phosphate import ATP-binding protein PstB 2 from Halobacterium salinarum (strain ATCC 700922 / JCM 11081 / NRC-1) (Halobacterium halobium).